The chain runs to 427 residues: Inward rectifier potassium channel 2 (427 aa).

Topologically, residues 1–81 (MGSVRTNRYS…IFTTCVDIRW (81 aa)) are cytoplasmic. An S-nitrosocysteine modification is found at Cys76. Residues 82 to 106 (RWMLVIFCLAFVLSWLFFGCVFWLI) form a helical membrane-spanning segment. Topologically, residues 107–128 (ALLHGDLDASKESKACVSEVNS) are extracellular. Positions 129–140 (FTAAFLFSIETQ) form an intramembrane region, helical; Pore-forming. An intramembrane region (pore-forming) is located at residues 141-147 (TTIGYGF). The Selectivity filter signature appears at 142 to 147 (TIGYGF). The Extracellular segment spans residues 148–156 (RCVTDECPI). Residues 157–178 (AVFMVVFQSIVGCIIDAFIIGA) traverse the membrane as a helical segment. Residues 179–427 (VMAKMAKPKK…PRPLRRESEI (249 aa)) lie on the Cytoplasmic side of the membrane. The polyphosphoinositide (PIP2)-binding stretch occupies residues 181–208 (AKMAKPKKRNETLVFSHNAVIAMRDGKL). The segment at 383-427 (TSKEEEDSENGVPESTSTDSPPGIDLHNQASVPLEPRPLRRESEI) is disordered. The short motif at 425 to 427 (SEI) is the PDZ-binding element.

The protein belongs to the inward rectifier-type potassium channel (TC 1.A.2.1) family. KCNJ2 subfamily. In terms of assembly, homotetramer. Homomultimeric and heteromultimeric association with KCNJ4/Kir2.3. Can form heteromeric channels with Kir2.6/KCNJ18. Associates, via its PDZ-recognition domain, with a complex containing LIN7A, LIN7B, LIN7C, DLG1, CASK and APBA1. S-nitrosylation increases the open probability and inward rectifying currents. In terms of tissue distribution, prominently expressed in the central nervous system. Also found in other excitable tissues such as heart and skeletal muscle.

Its subcellular location is the cell membrane. It localises to the sarcolemma. It is found in the T-tubule. The catalysed reaction is K(+)(in) = K(+)(out). With respect to regulation, activated by phosphatidylinositol 4,5 biphosphate (PtdIns(4,5)P2). Functionally, inward rectifier potassium channels are characterized by a greater tendency to allow potassium to flow into the cell rather than out of it. Their voltage dependence is regulated by the concentration of extracellular potassium; as external potassium is raised, the voltage range of the channel opening shifts to more positive voltages. The inward rectification is mainly due to the blockage of outward current by internal magnesium. Can be blocked by extracellular barium and cesium. Probably participates in establishing action potential waveform and excitability of neuronal and muscle tissues. The sequence is that of Inward rectifier potassium channel 2 (Kcnj2) from Rattus norvegicus (Rat).